The sequence spans 172 residues: 3-hydroxydecanoyl-[acyl-carrier-protein] dehydratase (172 aa).

The active site involves His-71.

It belongs to the thioester dehydratase family. FabA subfamily. In terms of assembly, homodimer.

The protein localises to the cytoplasm. The catalysed reaction is a (3R)-hydroxyacyl-[ACP] = a (2E)-enoyl-[ACP] + H2O. It catalyses the reaction (3R)-hydroxydecanoyl-[ACP] = (2E)-decenoyl-[ACP] + H2O. The enzyme catalyses (2E)-decenoyl-[ACP] = (3Z)-decenoyl-[ACP]. The protein operates within lipid metabolism; fatty acid biosynthesis. Its function is as follows. Necessary for the introduction of cis unsaturation into fatty acids. Catalyzes the dehydration of (3R)-3-hydroxydecanoyl-ACP to E-(2)-decenoyl-ACP and then its isomerization to Z-(3)-decenoyl-ACP. Can catalyze the dehydratase reaction for beta-hydroxyacyl-ACPs with saturated chain lengths up to 16:0, being most active on intermediate chain length. The protein is 3-hydroxydecanoyl-[acyl-carrier-protein] dehydratase of Serratia proteamaculans (strain 568).